Reading from the N-terminus, the 298-residue chain is UTP--glucose-1-phosphate uridylyltransferase (298 aa).

This sequence belongs to the UDPGP type 2 family.

It catalyses the reaction alpha-D-glucose 1-phosphate + UTP + H(+) = UDP-alpha-D-glucose + diphosphate. It functions in the pathway carbohydrate metabolism; nucleotide-sugar metabolism. The protein operates within capsule biogenesis; capsule polysaccharide biosynthesis. The chain is UTP--glucose-1-phosphate uridylyltransferase (galF) from Klebsiella pneumoniae.